We begin with the raw amino-acid sequence, 148 residues long: NADH-quinone oxidoreductase subunit K 2 (148 aa).

3 helical membrane-spanning segments follow: residues 3-23 (LAYP…GVLA), 28-48 (ILVL…LVAF), and 64-84 (LFTI…VLAV). The interval 96–148 (LRDTAETDAAETLPDDAGTGPSGTDAAPNGDTTTATGRPGDNAGKNKKAEATR) is disordered.

Belongs to the complex I subunit 4L family. In terms of assembly, NDH-1 is composed of 14 different subunits. Subunits NuoA, H, J, K, L, M, N constitute the membrane sector of the complex.

It localises to the cell membrane. It carries out the reaction a quinone + NADH + 5 H(+)(in) = a quinol + NAD(+) + 4 H(+)(out). Functionally, NDH-1 shuttles electrons from NADH, via FMN and iron-sulfur (Fe-S) centers, to quinones in the respiratory chain. The immediate electron acceptor for the enzyme in this species is believed to be a menaquinone. Couples the redox reaction to proton translocation (for every two electrons transferred, four hydrogen ions are translocated across the cytoplasmic membrane), and thus conserves the redox energy in a proton gradient. The sequence is that of NADH-quinone oxidoreductase subunit K 2 from Streptomyces griseus subsp. griseus (strain JCM 4626 / CBS 651.72 / NBRC 13350 / KCC S-0626 / ISP 5235).